A 338-amino-acid chain; its full sequence is Phenylalanine--tRNA ligase alpha subunit (338 aa).

E252 is a Mg(2+) binding site.

Belongs to the class-II aminoacyl-tRNA synthetase family. Phe-tRNA synthetase alpha subunit type 1 subfamily. As to quaternary structure, tetramer of two alpha and two beta subunits. The cofactor is Mg(2+).

Its subcellular location is the cytoplasm. It catalyses the reaction tRNA(Phe) + L-phenylalanine + ATP = L-phenylalanyl-tRNA(Phe) + AMP + diphosphate + H(+). The chain is Phenylalanine--tRNA ligase alpha subunit from Pseudomonas aeruginosa (strain ATCC 15692 / DSM 22644 / CIP 104116 / JCM 14847 / LMG 12228 / 1C / PRS 101 / PAO1).